The following is a 444-amino-acid chain: Multidrug resistance protein MdtA (444 aa).

Positions 1 to 20 are cleaved as a signal peptide; sequence MKSQSKRTSRLFVFVGVVVA. The segment covering 37–52 has biased composition (polar residues); it reads NNTSGAQQSARGQDTS. 2 disordered regions span residues 37 to 60 and 399 to 444; these read NNTS…RNTP and PRSA…AEKS. The span at 409–419 shows a compositional bias: low complexity; the sequence is ASAEKAAAEAE. A compositionally biased stretch (polar residues) spans 435-444; the sequence is ARSTTAAEKS.

It belongs to the membrane fusion protein (MFP) (TC 8.A.1) family. As to quaternary structure, part of a tripartite efflux system composed of MdtA, MdtB and MdtC.

Its subcellular location is the cell inner membrane. The protein is Multidrug resistance protein MdtA of Yersinia pseudotuberculosis serotype I (strain IP32953).